The following is a 445-amino-acid chain: Methylthioribose-1-phosphate isomerase (445 aa).

The Proton donor role is filled by D286.

The protein belongs to the eIF-2B alpha/beta/delta subunits family. MtnA subfamily.

It localises to the cytoplasm. Its subcellular location is the nucleus. It carries out the reaction 5-(methylsulfanyl)-alpha-D-ribose 1-phosphate = 5-(methylsulfanyl)-D-ribulose 1-phosphate. It participates in amino-acid biosynthesis; L-methionine biosynthesis via salvage pathway; L-methionine from S-methyl-5-thio-alpha-D-ribose 1-phosphate: step 1/6. Catalyzes the interconversion of methylthioribose-1-phosphate (MTR-1-P) into methylthioribulose-1-phosphate (MTRu-1-P). The polypeptide is Methylthioribose-1-phosphate isomerase (mri1) (Sclerotinia sclerotiorum (strain ATCC 18683 / 1980 / Ss-1) (White mold)).